A 176-amino-acid polypeptide reads, in one-letter code: MDLPGPIHDFLLVFLGSGIILGGLGVVLLTNPIYSAFSLGFVFICISLFYILSNSYFVAAAQLLIYVGAINVLILFAVMFMNGSEYYKDFHLWTLGDGLTSLICTILFLSLITTILDTSWYGILWTTKSNQIIEKDFISNSQQLGILLSTDFFLPFELMSIILLVALLGAIAAARQ.

5 helical membrane-spanning segments follow: residues 10 to 30 (FLLV…VLLT), 32 to 52 (PIYS…FYIL), 61 to 81 (AQLL…VMFM), 92 to 112 (LWTL…LSLI), and 152 to 172 (FFLP…GAIA).

The protein belongs to the complex I subunit 6 family. NDH is composed of at least 16 different subunits, 5 of which are encoded in the nucleus.

The protein localises to the plastid. It localises to the chloroplast thylakoid membrane. It carries out the reaction a plastoquinone + NADH + (n+1) H(+)(in) = a plastoquinol + NAD(+) + n H(+)(out). The enzyme catalyses a plastoquinone + NADPH + (n+1) H(+)(in) = a plastoquinol + NADP(+) + n H(+)(out). In terms of biological role, NDH shuttles electrons from NAD(P)H:plastoquinone, via FMN and iron-sulfur (Fe-S) centers, to quinones in the photosynthetic chain and possibly in a chloroplast respiratory chain. The immediate electron acceptor for the enzyme in this species is believed to be plastoquinone. Couples the redox reaction to proton translocation, and thus conserves the redox energy in a proton gradient. This Pelargonium hortorum (Common geranium) protein is NAD(P)H-quinone oxidoreductase subunit 6, chloroplastic (ndhG).